The chain runs to 279 residues: Diaminopimelate epimerase (279 aa).

Asn11 and Asn64 together coordinate substrate. Cys73 serves as the catalytic Proton donor. Residues 74–75 (GN), Asn170, and 187–188 (ER) contribute to the substrate site. Cys196 acts as the Proton acceptor in catalysis. 197–198 (GS) contributes to the substrate binding site. Positions 255–279 (NTDHQRRRHSLSRSPSGRPRLQECR) are disordered.

This sequence belongs to the diaminopimelate epimerase family. In terms of assembly, homodimer.

It localises to the cytoplasm. It catalyses the reaction (2S,6S)-2,6-diaminopimelate = meso-2,6-diaminopimelate. Its pathway is amino-acid biosynthesis; L-lysine biosynthesis via DAP pathway; DL-2,6-diaminopimelate from LL-2,6-diaminopimelate: step 1/1. In terms of biological role, catalyzes the stereoinversion of LL-2,6-diaminopimelate (L,L-DAP) to meso-diaminopimelate (meso-DAP), a precursor of L-lysine. This chain is Diaminopimelate epimerase, found in Methanopyrus kandleri (strain AV19 / DSM 6324 / JCM 9639 / NBRC 100938).